The following is a 49-amino-acid chain: uncharacterized protein (49 aa).

Residues 8–28 traverse the membrane as a helical segment; the sequence is FFLFSSGVLQATTLLLVILIF.

The protein resides in the cell membrane. This is an uncharacterized protein from Bacillus subtilis (strain 168).